The following is a 345-amino-acid chain: Probable 1-aminocyclopropane-1-carboxylate deaminase (345 aa).

The residue at position 58 (Lys58) is an N6-(pyridoxal phosphate)lysine. The active-site Nucleophile is Ser85.

The protein belongs to the ACC deaminase/D-cysteine desulfhydrase family. It depends on pyridoxal 5'-phosphate as a cofactor.

It catalyses the reaction 1-aminocyclopropane-1-carboxylate + H2O = 2-oxobutanoate + NH4(+). Its function is as follows. Catalyzes a cyclopropane ring-opening reaction, the irreversible conversion of 1-aminocyclopropane-1-carboxylate (ACC) to ammonia and alpha-ketobutyrate. The polypeptide is Probable 1-aminocyclopropane-1-carboxylate deaminase (Cryptococcus neoformans var. neoformans serotype D (strain JEC21 / ATCC MYA-565) (Filobasidiella neoformans)).